The following is a 276-amino-acid chain: Probable NADH-ubiquinone oxidoreductase 30.4 kDa subunit, mitochondrial (276 aa).

Positions 248 to 276 (EPVGEGKDFTPESFKLPTPQPEPEQEEKK) are disordered.

It belongs to the complex I 30 kDa subunit family. In terms of assembly, complex I is composed of about 30 different subunits. This is a component of the iron-sulfur protein fraction.

The protein localises to the mitochondrion inner membrane. The catalysed reaction is a ubiquinone + NADH + 5 H(+)(in) = a ubiquinol + NAD(+) + 4 H(+)(out). Its function is as follows. Core subunit of the mitochondrial membrane respiratory chain NADH dehydrogenase (Complex I) that is believed to belong to the minimal assembly required for catalysis. Complex I functions in the transfer of electrons from NADH to the respiratory chain. The immediate electron acceptor for the enzyme is believed to be ubiquinone. Essential for N-alkane assimilation. The polypeptide is Probable NADH-ubiquinone oxidoreductase 30.4 kDa subunit, mitochondrial (ALI1) (Candida maltosa (Yeast)).